A 305-amino-acid polypeptide reads, in one-letter code: Protein-methionine-sulfoxide reductase catalytic subunit MsrP (305 aa).

A signal peptide (tat-type signal) is located at residues 1–54 (MLIRKPADHLPSEITSESVYFNRRQFMAGAAGLLLSAETLAGLAAKKSPLSQLA). Mo-molybdopterin is bound by residues asparagine 69, 72-73 (YE), cysteine 126, threonine 161, asparagine 209, arginine 214, and 225-227 (SIK).

It belongs to the MsrP family. As to quaternary structure, heterodimer of a catalytic subunit (MsrP) and a heme-binding subunit (MsrQ). It depends on Mo-molybdopterin as a cofactor. Post-translationally, predicted to be exported by the Tat system. The position of the signal peptide cleavage has not been experimentally proven.

It is found in the periplasm. The enzyme catalyses L-methionyl-[protein] + a quinone + H2O = L-methionyl-(S)-S-oxide-[protein] + a quinol. It carries out the reaction L-methionyl-[protein] + a quinone + H2O = L-methionyl-(R)-S-oxide-[protein] + a quinol. Part of the MsrPQ system that repairs oxidized periplasmic proteins containing methionine sulfoxide residues (Met-O), using respiratory chain electrons. Thus protects these proteins from oxidative-stress damage caused by reactive species of oxygen and chlorine generated by the host defense mechanisms. MsrPQ is essential for the maintenance of envelope integrity under bleach stress, rescuing a wide series of structurally unrelated periplasmic proteins from methionine oxidation. The catalytic subunit MsrP is non-stereospecific, being able to reduce both (R-) and (S-) diastereoisomers of methionine sulfoxide. The polypeptide is Protein-methionine-sulfoxide reductase catalytic subunit MsrP (Chromobacterium violaceum (strain ATCC 12472 / DSM 30191 / JCM 1249 / CCUG 213 / NBRC 12614 / NCIMB 9131 / NCTC 9757 / MK)).